We begin with the raw amino-acid sequence, 436 residues long: T-box transcription factor TBX6 (436 aa).

Residues 67–87 (PLLPSALGPETAPPPPEALHS) form a disordered region. Residues 100-273 (LWKEFSAVGT…ANPFAKGFRE (174 aa)) constitute a DNA-binding region (T-box). A compositionally biased stretch (basic and acidic residues) spans 275–284 (GRNCKRERDA). Disordered regions lie at residues 275-344 (GRNC…CGGP) and 360-383 (PSHLPARTPSFPEAPDPGRPAPYS). Residues 332–344 (EAASASAPPCGGP) show a composition bias toward low complexity.

The protein localises to the nucleus. Its function is as follows. T-box transcription factor that plays an essential role in the determination of the fate of axial stem cells: neural vs mesodermal. Acts in part by down-regulating, a specific enhancer (N1) of SOX2, to inhibit neural development. Seems to also play an essential role in left/right axis determination and acts through effects on Notch signaling around the node as well as through an effect on the morphology and motility of the nodal cilia. The sequence is that of T-box transcription factor TBX6 (Tbx6) from Rattus norvegicus (Rat).